Consider the following 204-residue polypeptide: Protein GrpE (204 aa).

The interval 1–55 (MSSKNNPESETKAKNKWEKVMEAEEEQEEGRGDGSQEMEPHREGLEFPSREKLEG) is disordered. Basic and acidic residues-rich tracts occupy residues 7–22 (PESE…KVME) and 29–55 (EGRG…KLEG).

The protein belongs to the GrpE family. Homodimer.

The protein resides in the cytoplasm. In terms of biological role, participates actively in the response to hyperosmotic and heat shock by preventing the aggregation of stress-denatured proteins, in association with DnaK and GrpE. It is the nucleotide exchange factor for DnaK and may function as a thermosensor. Unfolded proteins bind initially to DnaJ; upon interaction with the DnaJ-bound protein, DnaK hydrolyzes its bound ATP, resulting in the formation of a stable complex. GrpE releases ADP from DnaK; ATP binding to DnaK triggers the release of the substrate protein, thus completing the reaction cycle. Several rounds of ATP-dependent interactions between DnaJ, DnaK and GrpE are required for fully efficient folding. The protein is Protein GrpE of Coxiella burnetii (strain RSA 331 / Henzerling II).